Here is a 498-residue protein sequence, read N- to C-terminus: Tyrosine 3-monooxygenase (498 aa).

Positions 1–10 are enriched in polar residues; sequence MPTPSASSPQ. The disordered stretch occupies residues 1 to 33; that stretch reads MPTPSASSPQPKGFRRAVSEQDTKQAEAVTSPR. Phosphoserine occurs at positions 19 and 31. A Phosphoserine; by CaMK2 and PKA modification is found at serine 40. Histidine 331, histidine 336, and glutamate 376 together coordinate Fe cation. Serine 472 bears the Phosphoserine mark.

The protein belongs to the biopterin-dependent aromatic amino acid hydroxylase family. Homotetramer. Interacts (when phosphorylated at Ser-19) with YWHAG; one YWHAG dimer bounds to one TH tetramer and this interaction may influence the phosphorylation and dephosphorylation of other sites. Interacts with NT5DC2; the interaction results in reduced phosphorylation and decreased catalytic activity of TH. The cofactor is Fe(2+). Post-translationally, phosphorylated on Ser-19, Ser-31 and Ser-40 by several protein kinases with different site specificities. Phosphorylation at Ser-31 and Ser-40 leads to an increase of TH activity. Phosphorylation at Ser-40 activates the enzyme and also counteracts the feedback inhibition of TH by catecholamines. Phosphorylation of Ser-19 and Ser-31 triggers the proteasomal degradation of TH through the ubiquitin-proteasome pathway. Phosphorylation at Ser-31 facilitates transport of TH from the soma to the nerve terminals via the microtubule network. Phosphorylation at Ser-19 induces the high-affinity binding to the 14-3-3 protein YWHAG; this interaction may influence the phosphorylation and dephosphorylation of other sites. Ser-19 increases the phosphorylation at Ser-40 in a hierarchical manner, leading to increased activity. In terms of tissue distribution, expressed in the adrenal gland. Expressed in the retina. Expressed in the in the striatum (at protein level).

Its subcellular location is the cytoplasm. It is found in the perinuclear region. It localises to the nucleus. The protein localises to the cell projection. The protein resides in the axon. Its subcellular location is the cytoplasmic vesicle. It is found in the secretory vesicle. It localises to the synaptic vesicle. The catalysed reaction is (6R)-L-erythro-5,6,7,8-tetrahydrobiopterin + L-tyrosine + O2 = (4aS,6R)-4a-hydroxy-L-erythro-5,6,7,8-tetrahydrobiopterin + L-dopa. The protein operates within catecholamine biosynthesis; dopamine biosynthesis; dopamine from L-tyrosine: step 1/2. Inhibited in feedback fashion by the catecholamine neurotransmitters, especially by dopamine in competition with tetrahydrobiopterin. Phosphorylation of several Ser/Thr residues in the N-terminus regulates the catalytic activity. Ser-31 and Ser-40 are readily phosphorylated to activate the catalytic activity. A Cysteine modification induced by N-ethylmaleimide (NEM), inhibits tyrosine 3-monooxygenase activity through the modification of the Cys-177. Functionally, catalyzes the conversion of L-tyrosine to L-dihydroxyphenylalanine (L-Dopa), the rate-limiting step in the biosynthesis of catecholamines, dopamine, noradrenaline, and adrenaline. Uses tetrahydrobiopterin and molecular oxygen to convert tyrosine to L-Dopa. In addition to tyrosine, is able to catalyze the hydroxylation of phenylalanine and tryptophan with lower specificity. Positively regulates the regression of retinal hyaloid vessels during postnatal development. The polypeptide is Tyrosine 3-monooxygenase (Th) (Mus musculus (Mouse)).